Here is a 464-residue protein sequence, read N- to C-terminus: tRNA modification GTPase MnmE (464 aa).

(6S)-5-formyl-5,6,7,8-tetrahydrofolate contacts are provided by Arg-27, Glu-89, and Arg-128. Residues 225–384 (GLATAIIGHP…LEDRIAAMFF (160 aa)) enclose the TrmE-type G domain. K(+) is bound at residue Asn-235. GTP contacts are provided by residues 235 to 240 (NVGKSS), 254 to 260 (TDVAGTT), and 279 to 282 (DTAG). Ser-239 lines the Mg(2+) pocket. K(+)-binding residues include Thr-254, Val-256, and Thr-259. Thr-260 provides a ligand contact to Mg(2+). Residue Lys-464 coordinates (6S)-5-formyl-5,6,7,8-tetrahydrofolate.

It belongs to the TRAFAC class TrmE-Era-EngA-EngB-Septin-like GTPase superfamily. TrmE GTPase family. In terms of assembly, homodimer. Heterotetramer of two MnmE and two MnmG subunits. K(+) serves as cofactor.

It is found in the cytoplasm. Functionally, exhibits a very high intrinsic GTPase hydrolysis rate. Involved in the addition of a carboxymethylaminomethyl (cmnm) group at the wobble position (U34) of certain tRNAs, forming tRNA-cmnm(5)s(2)U34. This is tRNA modification GTPase MnmE from Pediococcus pentosaceus (strain ATCC 25745 / CCUG 21536 / LMG 10740 / 183-1w).